Reading from the N-terminus, the 375-residue chain is Succinyl-diaminopimelate desuccinylase (375 aa).

H66 provides a ligand contact to Zn(2+). The active site involves D68. Zn(2+) is bound at residue D99. E133 functions as the Proton acceptor in the catalytic mechanism. Residues E134, E162, and H348 each contribute to the Zn(2+) site.

The protein belongs to the peptidase M20A family. DapE subfamily. As to quaternary structure, homodimer. Requires Zn(2+) as cofactor. Co(2+) serves as cofactor.

The catalysed reaction is N-succinyl-(2S,6S)-2,6-diaminopimelate + H2O = (2S,6S)-2,6-diaminopimelate + succinate. Its pathway is amino-acid biosynthesis; L-lysine biosynthesis via DAP pathway; LL-2,6-diaminopimelate from (S)-tetrahydrodipicolinate (succinylase route): step 3/3. Its function is as follows. Catalyzes the hydrolysis of N-succinyl-L,L-diaminopimelic acid (SDAP), forming succinate and LL-2,6-diaminopimelate (DAP), an intermediate involved in the bacterial biosynthesis of lysine and meso-diaminopimelic acid, an essential component of bacterial cell walls. This chain is Succinyl-diaminopimelate desuccinylase, found in Methylobacillus flagellatus (strain ATCC 51484 / DSM 6875 / VKM B-1610 / KT).